We begin with the raw amino-acid sequence, 334 residues long: Glyceraldehyde-3-phosphate dehydrogenase (334 aa).

NAD(+)-binding positions include 11-12 (RI), aspartate 33, and serine 119. Residues 149–151 (SCT) and threonine 180 contribute to the D-glyceraldehyde 3-phosphate site. Catalysis depends on cysteine 150, which acts as the Nucleophile. Asparagine 181 is a binding site for NAD(+). D-glyceraldehyde 3-phosphate contacts are provided by residues arginine 197, 210-211 (TG), and arginine 233. Residue asparagine 314 coordinates NAD(+).

The protein belongs to the glyceraldehyde-3-phosphate dehydrogenase family. As to quaternary structure, homotetramer.

The protein localises to the cytoplasm. It carries out the reaction D-glyceraldehyde 3-phosphate + phosphate + NAD(+) = (2R)-3-phospho-glyceroyl phosphate + NADH + H(+). It participates in carbohydrate degradation; glycolysis; pyruvate from D-glyceraldehyde 3-phosphate: step 1/5. Functionally, catalyzes the oxidative phosphorylation of glyceraldehyde 3-phosphate (G3P) to 1,3-bisphosphoglycerate (BPG) using the cofactor NAD. The first reaction step involves the formation of a hemiacetal intermediate between G3P and a cysteine residue, and this hemiacetal intermediate is then oxidized to a thioester, with concomitant reduction of NAD to NADH. The reduced NADH is then exchanged with the second NAD, and the thioester is attacked by a nucleophilic inorganic phosphate to produce BPG. This chain is Glyceraldehyde-3-phosphate dehydrogenase (gap), found in Clostridium pasteurianum.